Here is a 63-residue protein sequence, read N- to C-terminus: MLGQSIRRFTTSVVRRSHYEEGPGKNLPFSVENKWRLLLMMTVYFGSGFAAPFFIVRHQLLKK.

The transit peptide at Met1–Arg16 directs the protein to the mitochondrion. Over Ser17 to Asn33 the chain is Mitochondrial matrix. N6-acetyllysine; alternate is present on Lys25. Lys25 carries the N6-succinyllysine; alternate modification. The chain crosses the membrane as a helical span at residues Lys34 to Leu60. Residues Leu61–Lys63 lie on the Mitochondrial intermembrane side of the membrane.

The protein belongs to the cytochrome c oxidase VIIc family. In terms of assembly, component of the cytochrome c oxidase (complex IV, CIV), a multisubunit enzyme composed of 14 subunits. The complex is composed of a catalytic core of 3 subunits MT-CO1, MT-CO2 and MT-CO3, encoded in the mitochondrial DNA, and 11 supernumerary subunits COX4I, COX5A, COX5B, COX6A, COX6B, COX6C, COX7A, COX7B, COX7C, COX8 and NDUFA4, which are encoded in the nuclear genome. The complex exists as a monomer or a dimer and forms supercomplexes (SCs) in the inner mitochondrial membrane with NADH-ubiquinone oxidoreductase (complex I, CI) and ubiquinol-cytochrome c oxidoreductase (cytochrome b-c1 complex, complex III, CIII), resulting in different assemblies (supercomplex SCI(1)III(2)IV(1) and megacomplex MCI(2)III(2)IV(2)). Interacts with RAB5IF.

The protein resides in the mitochondrion inner membrane. It functions in the pathway energy metabolism; oxidative phosphorylation. Its function is as follows. Component of the cytochrome c oxidase, the last enzyme in the mitochondrial electron transport chain which drives oxidative phosphorylation. The respiratory chain contains 3 multisubunit complexes succinate dehydrogenase (complex II, CII), ubiquinol-cytochrome c oxidoreductase (cytochrome b-c1 complex, complex III, CIII) and cytochrome c oxidase (complex IV, CIV), that cooperate to transfer electrons derived from NADH and succinate to molecular oxygen, creating an electrochemical gradient over the inner membrane that drives transmembrane transport and the ATP synthase. Cytochrome c oxidase is the component of the respiratory chain that catalyzes the reduction of oxygen to water. Electrons originating from reduced cytochrome c in the intermembrane space (IMS) are transferred via the dinuclear copper A center (CU(A)) of subunit 2 and heme A of subunit 1 to the active site in subunit 1, a binuclear center (BNC) formed by heme A3 and copper B (CU(B)). The BNC reduces molecular oxygen to 2 water molecules using 4 electrons from cytochrome c in the IMS and 4 protons from the mitochondrial matrix. The chain is Cytochrome c oxidase subunit 7C, mitochondrial (Cox7c) from Rattus norvegicus (Rat).